The chain runs to 123 residues: MAITKEDILEAVGSLTVMELNDLVKAFEEKFGVSAAAVAVAGPAGAGAAAAEEKTEFDVVLASAGDQKVGVIKVVRAITGLGLKEAKDIVDGAPKTLKEGVSKAEAEDIQKQLEEAGAKVEIK.

It belongs to the bacterial ribosomal protein bL12 family. Homodimer. Part of the ribosomal stalk of the 50S ribosomal subunit. Forms a multimeric L10(L12)X complex, where L10 forms an elongated spine to which 2 to 4 L12 dimers bind in a sequential fashion. Binds GTP-bound translation factors.

In terms of biological role, forms part of the ribosomal stalk which helps the ribosome interact with GTP-bound translation factors. Is thus essential for accurate translation. The sequence is that of Large ribosomal subunit protein bL12 from Neisseria perflava.